An 89-amino-acid chain; its full sequence is Small ribosomal subunit protein uS15 (89 aa).

Positions 1–24 (MSLNAETKAGIVEKYRRDPSDTGS) are disordered. A compositionally biased stretch (basic and acidic residues) spans 11 to 20 (IVEKYRRDPS).

The protein belongs to the universal ribosomal protein uS15 family. As to quaternary structure, part of the 30S ribosomal subunit. Forms a bridge to the 50S subunit in the 70S ribosome, contacting the 23S rRNA.

In terms of biological role, one of the primary rRNA binding proteins, it binds directly to 16S rRNA where it helps nucleate assembly of the platform of the 30S subunit by binding and bridging several RNA helices of the 16S rRNA. Functionally, forms an intersubunit bridge (bridge B4) with the 23S rRNA of the 50S subunit in the ribosome. The polypeptide is Small ribosomal subunit protein uS15 (Thioalkalivibrio sulfidiphilus (strain HL-EbGR7)).